The chain runs to 402 residues: Diaminopimelate decarboxylase (402 aa).

The residue at position 61 (lysine 61) is an N6-(pyridoxal phosphate)lysine. Pyridoxal 5'-phosphate is bound by residues glycine 233 and 269–272 (EPGR). Residues arginine 272, arginine 304, tyrosine 308, glutamate 334, and tyrosine 360 each contribute to the substrate site. Residue tyrosine 360 coordinates pyridoxal 5'-phosphate.

It belongs to the Orn/Lys/Arg decarboxylase class-II family. LysA subfamily. In terms of assembly, homodimer. Pyridoxal 5'-phosphate is required as a cofactor.

It catalyses the reaction meso-2,6-diaminopimelate + H(+) = L-lysine + CO2. The protein operates within amino-acid biosynthesis; L-lysine biosynthesis via DAP pathway; L-lysine from DL-2,6-diaminopimelate: step 1/1. Its function is as follows. Specifically catalyzes the decarboxylation of meso-diaminopimelate (meso-DAP) to L-lysine. This is Diaminopimelate decarboxylase from Thermoplasma acidophilum (strain ATCC 25905 / DSM 1728 / JCM 9062 / NBRC 15155 / AMRC-C165).